The following is a 138-amino-acid chain: Putative pre-16S rRNA nuclease (138 aa).

The protein belongs to the YqgF nuclease family.

It localises to the cytoplasm. Its function is as follows. Could be a nuclease involved in processing of the 5'-end of pre-16S rRNA. In Escherichia coli O157:H7, this protein is Putative pre-16S rRNA nuclease.